The chain runs to 183 residues: Threonylcarbamoyl-AMP synthase (183 aa).

Residues 1–183 (MNITQIIEKL…LFTNQLVRQG (183 aa)) enclose the YrdC-like domain.

It belongs to the SUA5 family. TsaC subfamily.

It localises to the cytoplasm. The catalysed reaction is L-threonine + hydrogencarbonate + ATP = L-threonylcarbamoyladenylate + diphosphate + H2O. Required for the formation of a threonylcarbamoyl group on adenosine at position 37 (t(6)A37) in tRNAs that read codons beginning with adenine. Catalyzes the conversion of L-threonine, HCO(3)(-)/CO(2) and ATP to give threonylcarbamoyl-AMP (TC-AMP) as the acyladenylate intermediate, with the release of diphosphate. In Histophilus somni (strain 129Pt) (Haemophilus somnus), this protein is Threonylcarbamoyl-AMP synthase.